A 98-amino-acid polypeptide reads, in one-letter code: uncharacterized protein (98 aa).

Residues 1-63 are disordered; that stretch reads MPRDKKLVHR…NGHSQPAIVA (63 aa). Acidic residues predominate over residues 14–29; that stretch reads DVEDEDNDQREEEWSD. The segment covering 48–57 has biased composition (polar residues); sequence EPSSASNGHS.

This is an uncharacterized protein from Aedes vexans (Inland floodwater mosquito).